The following is a 953-amino-acid chain: Zinc finger protein 618 (953 aa).

Met-1 carries the post-translational modification N-acetylmethionine. A disordered region spans residues 1 to 56 (MSQPDGAAAPQVDGASAPGRKSAVNRERLKRSQKSSKVEGPEPVPAEASLSAEQGT). Residues Lys-63 and Lys-81 each participate in a glycyl lysine isopeptide (Lys-Gly) (interchain with G-Cter in SUMO2) cross-link. 2 C2H2-type zinc fingers span residues 146 to 168 (YECG…VRAH) and 187 to 209 (YTCD…RDLH). Lys-238 participates in a covalent cross-link: Glycyl lysine isopeptide (Lys-Gly) (interchain with G-Cter in SUMO2). Residues 255–277 (YTCEFCGKQYKYYTPYQEHVALH) form a C2H2-type 3 zinc finger. Disordered stretches follow at residues 283 to 305 (APGW…EVTP) and 337 to 390 (TPPA…SSEP). The segment covering 339–354 (PATQTQTFRAPNSGSP) has biased composition (polar residues). Residues 365-379 (FSRRVESKAQNHFEE) are compositionally biased toward basic and acidic residues. The segment at 391–413 (YTCGACGIQFQFYSNLLEHMQSH) adopts a C2H2-type 4 zinc-finger fold. Residues 419–428 (NNITSNQSRS) show a composition bias toward polar residues. The disordered stretch occupies residues 419–461 (NNITSNQSRSPPAAVEEKWKPQAQRNSANNTTTSGLTPNSVIP). Lys-436 is covalently cross-linked (Glycyl lysine isopeptide (Lys-Gly) (interchain with G-Cter in SUMO2)). The segment covering 441-458 (AQRNSANNTTTSGLTPNS) has biased composition (polar residues).

Belongs to the krueppel C2H2-type zinc-finger protein family. Interacts with UHRF2.

It localises to the nucleus. It is found in the chromosome. Its function is as follows. Regulates UHRF2 function as a specific 5-hydroxymethylcytosine (5hmC) reader by regulating its chromatin localization. The polypeptide is Zinc finger protein 618 (Znf618) (Mus musculus (Mouse)).